The following is a 187-amino-acid chain: UPF0340 protein str1894 (187 aa).

Belongs to the UPF0340 family.

The protein is UPF0340 protein str1894 of Streptococcus thermophilus (strain CNRZ 1066).